The following is a 151-amino-acid chain: MNKTPLPNPETLAPRWYLVDAANQRLGRLAAAVATLLRGKHKPDFTPHLDTGDYVIVINAEKVVVTGKKRTQKLYRRHSGRPGGMKVETFAQLQARLPERVVEKAVKGMLPHTRLGRRQFTKLKVYVGPNHPHEAQQPQVYPLNTIPGAKA.

The protein belongs to the universal ribosomal protein uL13 family. Part of the 50S ribosomal subunit.

Its function is as follows. This protein is one of the early assembly proteins of the 50S ribosomal subunit, although it is not seen to bind rRNA by itself. It is important during the early stages of 50S assembly. This chain is Large ribosomal subunit protein uL13, found in Synechococcus sp. (strain JA-2-3B'a(2-13)) (Cyanobacteria bacterium Yellowstone B-Prime).